Reading from the N-terminus, the 302-residue chain is Dioxygenase ALT11 (302 aa).

The interval 1-22 (MSSPELPSQMGVPNGHTKLQEV) is disordered. Fe cation-binding residues include His-147, Asp-149, and His-223.

This sequence belongs to the PhyH family. As to quaternary structure, homodimer. It depends on Fe cation as a cofactor.

It functions in the pathway mycotoxin biosynthesis. In terms of biological role, dioxygenase; part of the gene cluster that mediates the biosynthesis of the host-selective toxins (HSTs) AAL-toxins, sphinganine-analog mycotoxins responsible for Alternaria stem canker on tomato by the tomato pathotype. The biosynthesis starts with the polyketide synthase ALT1-catalyzed C-16 carbon chain assembly from one starter acetyl-CoA unit with malonyl-CoA extender units. ALT1 also selectively transfers methyl groups at the first and the third cycle of chain elongation for AAL toxin. The C-16 polyketide chain is released from the enzyme by a nucleophilic attack of a carbanion, which is derived from R-carbon of glycin by decarboxylation, on the carbonyl carbon of polyketide acyl chain. This step is probably catalyzed by a pyridoxal 5'-phosphate-dependent aminoacyl transferase ALT4. The respective functions of the other enzymes encoded by the cluster have still to be elucidated. The sphingosine N-acyltransferase-like protein ALT7 seems not to act as a resistance/self-tolerance factor against the toxin in the toxin biosynthetic gene cluster, contrary to what is expected. The polypeptide is Dioxygenase ALT11 (Alternaria alternata (Alternaria rot fungus)).